A 123-amino-acid polypeptide reads, in one-letter code: Small ribosomal subunit protein uS12c (123 aa).

It belongs to the universal ribosomal protein uS12 family. In terms of assembly, part of the 30S ribosomal subunit.

Its subcellular location is the plastid. It localises to the chloroplast. In terms of biological role, with S4 and S5 plays an important role in translational accuracy. Located at the interface of the 30S and 50S subunits. This is Small ribosomal subunit protein uS12c (rps12) from Marchantia polymorpha (Common liverwort).